A 186-amino-acid chain; its full sequence is Ribosome-recycling factor (186 aa).

It belongs to the RRF family.

It is found in the cytoplasm. Responsible for the release of ribosomes from messenger RNA at the termination of protein biosynthesis. May increase the efficiency of translation by recycling ribosomes from one round of translation to another. The sequence is that of Ribosome-recycling factor from Leptothrix cholodnii (strain ATCC 51168 / LMG 8142 / SP-6) (Leptothrix discophora (strain SP-6)).